A 1490-amino-acid chain; its full sequence is ABC transporter CDR4 (1490 aa).

The span at 1–12 (MADADTSSNSSK) shows a compositional bias: polar residues. Disordered stretches follow at residues 1-26 (MADA…GTYQ) and 53-75 (LKRQ…LSGK). Topologically, residues 1-516 (MADADTSSNS…NILRIKGNPS (516 aa)) are cytoplasmic. Residues 58-67 (SRQESQKSNE) show a composition bias toward basic and acidic residues. Residues 151–407 (PKYLSLFFRE…FIDMGYECPQ (257 aa)) enclose the ABC transporter 1 domain. 6 helical membrane-spanning segments follow: residues 517–537 (IHLF…SIFY), 551–571 (AALF…IFSL), 601–621 (LPTK…MVNF), 626–646 (GNFF…SHIF), 659–679 (AMTP…FVIP), and 767–787 (FGIV…LCEI). The Cytoplasmic portion of the chain corresponds to 788-1182 (NKGAMQKGEI…VFEQNWRTPS (395 aa)). In terms of domain architecture, ABC transporter 2 spans 846–1090 (FFWRDLTYQV…LINYFEKYGA (245 aa)). 882–889 (GASGAGKT) contacts ATP. Transmembrane regions (helical) follow at residues 1183–1203 (YLYS…FSFY), 1217–1237 (FSVF…LPTF), and 1268–1288 (IPWN…PVGL). An N-linked (GlcNAc...) asparagine glycan is attached at asparagine 1291. Transmembrane regions (helical) follow at residues 1304-1324 (FMWF…QLCI), 1333-1353 (AANL…VLVT), and 1370-1390 (FTYL…VTCA). An N-linked (GlcNAc...) asparagine glycan is attached at asparagine 1424. Residues 1455–1475 (IGIYIAFIGINIIGTFILYWF) form a helical membrane-spanning segment.

It belongs to the ABC transporter superfamily. ABCG family. PDR (TC 3.A.1.205) subfamily.

Its subcellular location is the membrane. This chain is ABC transporter CDR4 (CDR4), found in Candida albicans (Yeast).